A 657-amino-acid chain; its full sequence is Pyoverdine export ATP-binding/permease protein PvdT (657 aa).

Positions 6–245 constitute an ABC transporter domain; sequence IDLRNIRKSY…LSANAGALQA (240 aa). Residue 43–50 coordinates ATP; it reads GASGSGKS. Helical transmembrane passes span 285-305, 532-552, 590-610, and 620-640; these read ALTLLGIIIGVASVVVMLAVG, LSLMLGAIAAISLLVGGIGVM, LSVVGGLAGIGVALIIGGILI, and LAAVLGAFACALVTGVIFGFM.

This sequence belongs to the ABC transporter superfamily. Macrolide exporter (TC 3.A.1.122) family. Part of the tripartite efflux system PvdRT-OpmQ, which is composed of an inner membrane component with both ATPase and permease domains, PvdT, a periplasmic membrane fusion protein, PvdR, and an outer membrane component, OpmQ.

The protein resides in the cell inner membrane. Its function is as follows. Part of the tripartite efflux system PvdRT-OpmQ required for the secretion into the extracellular milieu of the siderophore pyoverdine (PVD), which is involved in iron acquisition. This subunit binds PVD and drives its secretion by hydrolyzing ATP. The system is responsible for export of newly synthesized PVD after the final steps of biosynthesis have taken place in the periplasm. It is also responsible for recycling of PVD after internalization of ferri-PVD into the periplasm by the outer-membrane receptor FpvA and release of iron from PVD, thus making PVD available for new cycles of iron uptake. This is Pyoverdine export ATP-binding/permease protein PvdT from Pseudomonas fluorescens (strain ATCC BAA-477 / NRRL B-23932 / Pf-5).